The sequence spans 431 residues: Histidinol dehydrogenase (431 aa).

Residues Y124, Q187, and N210 each contribute to the NAD(+) site. Positions 236, 258, and 261 each coordinate substrate. Q258 and H261 together coordinate Zn(2+). Residues E325 and H326 each act as proton acceptor in the active site. Substrate-binding residues include H326, D359, E413, and H418. Position 359 (D359) interacts with Zn(2+). H418 contacts Zn(2+).

It belongs to the histidinol dehydrogenase family. Requires Zn(2+) as cofactor.

The catalysed reaction is L-histidinol + 2 NAD(+) + H2O = L-histidine + 2 NADH + 3 H(+). It functions in the pathway amino-acid biosynthesis; L-histidine biosynthesis; L-histidine from 5-phospho-alpha-D-ribose 1-diphosphate: step 9/9. Catalyzes the sequential NAD-dependent oxidations of L-histidinol to L-histidinaldehyde and then to L-histidine. This Legionella pneumophila (strain Lens) protein is Histidinol dehydrogenase.